A 278-amino-acid chain; its full sequence is Diaminopimelate epimerase (278 aa).

Residues asparagine 13, glutamine 46, and asparagine 66 each coordinate substrate. Cysteine 75 functions as the Proton donor in the catalytic mechanism. Residues 76-77 (GN), asparagine 159, asparagine 192, and 210-211 (ER) each bind substrate. Catalysis depends on cysteine 219, which acts as the Proton acceptor. 220–221 (GT) contacts substrate.

It belongs to the diaminopimelate epimerase family. Homodimer.

The protein localises to the cytoplasm. The enzyme catalyses (2S,6S)-2,6-diaminopimelate = meso-2,6-diaminopimelate. Its pathway is amino-acid biosynthesis; L-lysine biosynthesis via DAP pathway; DL-2,6-diaminopimelate from LL-2,6-diaminopimelate: step 1/1. Catalyzes the stereoinversion of LL-2,6-diaminopimelate (L,L-DAP) to meso-diaminopimelate (meso-DAP), a precursor of L-lysine and an essential component of the bacterial peptidoglycan. The polypeptide is Diaminopimelate epimerase (Laribacter hongkongensis (strain HLHK9)).